A 262-amino-acid chain; its full sequence is Thiamine thiazole synthase (262 aa).

Residues alanine 36, 55-56, glycine 63, valine 127, and 154-156 contribute to the NAD(+) site; these read EK and HVD. Residues aspartate 156 and histidine 171 each coordinate Fe cation. Methionine 224 lines the NAD(+) pocket. Arginine 234 provides a ligand contact to glycine.

Belongs to the THI4 family. Homooctamer; tetramer of dimers. Fe(2+) serves as cofactor.

It catalyses the reaction hydrogen sulfide + glycine + NAD(+) = ADP-5-ethyl-4-methylthiazole-2-carboxylate + nicotinamide + 3 H2O + H(+). It functions in the pathway cofactor biosynthesis; thiamine diphosphate biosynthesis. Functionally, involved in the biosynthesis of the thiazole moiety of thiamine. Catalyzes the conversion of NAD and glycine to adenosine diphosphate 5-(2-hydroxyethyl)-4-methylthiazole-2-carboxylate (ADT), an adenylated thiazole intermediate, using free sulfide as a source of sulfur. The protein is Thiamine thiazole synthase of Methanothrix thermoacetophila (strain DSM 6194 / JCM 14653 / NBRC 101360 / PT) (Methanosaeta thermophila).